The sequence spans 393 residues: MRDTPLSNCERLFLLKAIKEKKRLDGRQTYDYRNIKISFGTDYGCCVVELGKTRVLSQVSCELVPPKDSRPTEGIVFFNLELSPMASPAFEPNRQSELLVTLNRQLERCLRNSKCIDTESLCVVSGEKVWQIRVDVHVLNHDGNLMDAASIAAISALSHFRRPDVAIQGRDVTVFGPEERDPIPLSIYHMPICVSFAFFLQGSFLLVDPCEREERVKDGLLVIAMNKHREICSIQSSGGIMLLKEQVLRCSKIASVKVSEITELINKALENDKKVRKEGGKFGFAESMPKERITTLKRDEAPVEMTDVKETADDIVQRTETTTETVPSPILVATGTAQIGEGIVNSWGLDEDEDDELQTEDRKTDEVVVITDSEEEEVVILNDQKSKKTSKQK.

The segment at 1 to 268 (MRDTPLSNCE…SEITELINKA (268 aa)) is ARE binding.

Belongs to the RNase PH family. As to quaternary structure, component of the RNA exosome complex.

It is found in the cytoplasm. The protein localises to the nucleus. It localises to the nucleolus. The protein resides in the nucleoplasm. Functionally, non-catalytic component of the RNA exosome complex which has 3'-&gt;5' exoribonuclease activity and participates in a multitude of cellular RNA processing and degradation events. In the nucleus, the RNA exosome complex is involved in proper maturation of stable RNA species such as rRNA, snRNA and snoRNA, in the elimination of RNA processing by-products and non-coding 'pervasive' transcripts, such as antisense RNA species and promoter-upstream transcripts (PROMPTs), and of mRNAs with processing defects, thereby limiting or excluding their export to the cytoplasm. In the cytoplasm, the RNA exosome complex is involved in general mRNA turnover and specifically degrades inherently unstable mRNAs containing AU-rich elements (AREs) within their 3' untranslated regions, and in RNA surveillance pathways, preventing translation of aberrant mRNAs. The protein is Exosome complex component RRP45 of Danio rerio (Zebrafish).